Consider the following 531-residue polypeptide: Pescadillo homolog (531 aa).

The BRCT domain maps to 309–398 (SIKTMFKGCV…RKLPTERYMP (90 aa)).

The protein belongs to the pescadillo family.

Its subcellular location is the nucleus. It is found in the nucleolus. It localises to the nucleoplasm. Its function is as follows. Required for maturation of ribosomal RNAs and formation of the large ribosomal subunit. The chain is Pescadillo homolog from Caenorhabditis elegans.